The chain runs to 366 residues: Transcription factor MYB61 (366 aa).

2 HTH myb-type domains span residues 9–61 (KQKL…INYL) and 62–116 (RPDL…KKKL). 2 consecutive DNA-binding regions (H-T-H motif) follow at residues 37-61 (WSSV…INYL) and 89-112 (WSQI…NSSI). The interval 115-164 (KLKQRGIDPNTHKPISEVESFSDKDKPTTSNNKRSGNDHKSPSSSSATNQ) is disordered. The span at 124 to 141 (NTHKPISEVESFSDKDKP) shows a compositional bias: basic and acidic residues.

In terms of tissue distribution, expressed specifically in guard cells. Expressed in sink tissues, such as xylem, roots and developing seeds.

Its subcellular location is the nucleus. In terms of biological role, transcription factor that coordinates a small network of downstream target genes required for several aspects of plant growth and development, such as xylem formation and xylem cell differentiation, and lateral root formation. Regulates a specific set of target genes by binding DNA to the AC cis-element 5'-ACCTAC-3'. Functions as a transcriptional regulator of stomatal closure. Plays a role the regulation of stomatal pore size independently of abscisic acid (ABA). Required for seed coat mucilage deposition during the development of the seed coat epidermis. Involved in the induction of trichome initiation and branching by positively regulating GL1 and GL2. Required for gibberellin (GA) biosynthesis and degradation by positively affecting the expression of the enzymes that convert GA9 into the bioactive GA4, as well as the enzymes involved in the degradation of GA4. This is Transcription factor MYB61 from Arabidopsis thaliana (Mouse-ear cress).